A 370-amino-acid polypeptide reads, in one-letter code: MRSGRYIGVMSGTSLDGVDVVLAAIDEHTVAQQARYCHPIPQDIKMAILGMCQGQAVTLSALGQLDTRLGILFAEAVLTLLKETGLRAQGITAIGCHGQTVWHEPTGEAPCTLQIGDNNRVAALTGITTIGDFRRRDLAYGGQGAPLVPSFHHALLLHPVERRIVLNIGGIANLSLLVPGAPVRGYDTGPGNMLLDAWIWRHCAQPYDKDALWAINGQANPLLLRRMLTDPYFALRAPKSTGREYFNLGWLERMLAGLPPIAPQDVQATLVELTAISIADQVLLVGGCERLLVCGGGAHNPLIMARLSALLPGIEVSTTDECGVNGDDMEALAFAWLASRTLSGLPGNLPSVTGASQETVLGAIYPVNVD.

12-19 (GTSLDGVD) is a binding site for ATP.

Belongs to the anhydro-N-acetylmuramic acid kinase family.

It carries out the reaction 1,6-anhydro-N-acetyl-beta-muramate + ATP + H2O = N-acetyl-D-muramate 6-phosphate + ADP + H(+). Its pathway is amino-sugar metabolism; 1,6-anhydro-N-acetylmuramate degradation. It participates in cell wall biogenesis; peptidoglycan recycling. Its function is as follows. Catalyzes the specific phosphorylation of 1,6-anhydro-N-acetylmuramic acid (anhMurNAc) with the simultaneous cleavage of the 1,6-anhydro ring, generating MurNAc-6-P. Is required for the utilization of anhMurNAc either imported from the medium or derived from its own cell wall murein, and thus plays a role in cell wall recycling. The chain is Anhydro-N-acetylmuramic acid kinase from Pectobacterium atrosepticum (strain SCRI 1043 / ATCC BAA-672) (Erwinia carotovora subsp. atroseptica).